A 100-amino-acid chain; its full sequence is MIENILIIGAFLFCIGTYGLITSKNMIKVLMCLELMFNSVNINLVAFSNFFDSESIKGQVFAVFIIAIAAAEAAIGLAIVFALYRNRRSTKVNQFNLLKW.

Helical transmembrane passes span 1-21 (MIEN…YGLI), 27-47 (IKVL…LVAF), and 61-81 (FAVF…AIVF).

Belongs to the complex I subunit 4L family. As to quaternary structure, NDH is composed of at least 16 different subunits, 5 of which are encoded in the nucleus.

It localises to the plastid. The protein localises to the chloroplast thylakoid membrane. It catalyses the reaction a plastoquinone + NADH + (n+1) H(+)(in) = a plastoquinol + NAD(+) + n H(+)(out). It carries out the reaction a plastoquinone + NADPH + (n+1) H(+)(in) = a plastoquinol + NADP(+) + n H(+)(out). NDH shuttles electrons from NAD(P)H:plastoquinone, via FMN and iron-sulfur (Fe-S) centers, to quinones in the photosynthetic chain and possibly in a chloroplast respiratory chain. The immediate electron acceptor for the enzyme in this species is believed to be plastoquinone. Couples the redox reaction to proton translocation, and thus conserves the redox energy in a proton gradient. The sequence is that of NAD(P)H-quinone oxidoreductase subunit 4L, chloroplastic from Chaetosphaeridium globosum (Charophycean green alga).